A 29-amino-acid chain; its full sequence is Cyclotide mden-B (29 aa).

A cross-link (cyclopeptide (Gly-Asn)) is located at residues glycine 1 to asparagine 29. Intrachain disulfides connect cysteine 5/cysteine 19, cysteine 9/cysteine 21, and cysteine 14/cysteine 26.

Belongs to the cyclotide family. Moebius subfamily. This is a cyclic peptide.

Probably participates in a plant defense mechanism. In Melicytus dentatus (Tree violet), this protein is Cyclotide mden-B.